Here is a 399-residue protein sequence, read N- to C-terminus: Dof zinc finger protein DOF5.1 (399 aa).

A Dof-type zinc finger spans residues 95 to 149 (LKCPRCDSTNTKFCYFNNYSLTQPRHFCKACRRYWTRGGALRSVPVGGGCRRNKR). Zn(2+)-binding residues include cysteine 97, cysteine 100, cysteine 122, and cysteine 125. Positions 139 to 176 (PVGGGCRRNKRTKNSSGGGGGSTSSGNSKSQDSATSND) are disordered.

As to expression, expressed ubiquitously, especially in the vascular tissues, except in seeds, petals and anthers. Specific to the vascular tissues in young leaves, cotyledons and flower buds. The PEAR proteins (e.g. DOF2.4, DOF5.1, DOF3.2, DOF1.1, DOF5.6 and DOF5.3) form a short-range concentration gradient that peaks at protophloem sieve elements (PSE).

The protein localises to the nucleus. Transcription factor that binds specifically to a 5'-AA[AG]G-3' consensus core sequence. Binds to 5'-TAAAGT-3' motif in REV promoter to triggers its transcription, thus regulating adaxial-abaxial polarity and influencing leaf axial patterning in an auxin transport- and response-dependent manner (e.g. IAA6 and IAA19 genes expression). Probably involved in early processes for vascular development. The PEAR proteins (e.g. DOF2.4, DOF5.1, DOF3.2, DOF1.1, DOF5.6 and DOF5.3) activate gene expression that promotes radial growth of protophloem sieve elements. The sequence is that of Dof zinc finger protein DOF5.1 from Arabidopsis thaliana (Mouse-ear cress).